Consider the following 279-residue polypeptide: Energy-coupling factor transporter ATP-binding protein EcfA1 (279 aa).

In terms of domain architecture, ABC transporter spans isoleucine 5–aspartate 240. Glycine 40–serine 47 lines the ATP pocket.

This sequence belongs to the ABC transporter superfamily. Energy-coupling factor EcfA family. In terms of assembly, forms a stable energy-coupling factor (ECF) transporter complex composed of 2 membrane-embedded substrate-binding proteins (S component), 2 ATP-binding proteins (A component) and 2 transmembrane proteins (T component).

It localises to the cell membrane. Its function is as follows. ATP-binding (A) component of a common energy-coupling factor (ECF) ABC-transporter complex. Unlike classic ABC transporters this ECF transporter provides the energy necessary to transport a number of different substrates. The polypeptide is Energy-coupling factor transporter ATP-binding protein EcfA1 (Streptococcus agalactiae serotype Ia (strain ATCC 27591 / A909 / CDC SS700)).